We begin with the raw amino-acid sequence, 40 residues long: Photosystem II reaction center protein J (40 aa).

The helical transmembrane segment at 8 to 28 (IPLWLIGTVTGIAVIGLIGVF) threads the bilayer.

It belongs to the PsbJ family. As to quaternary structure, PSII is composed of 1 copy each of membrane proteins PsbA, PsbB, PsbC, PsbD, PsbE, PsbF, PsbH, PsbI, PsbJ, PsbK, PsbL, PsbM, PsbT, PsbX, PsbY, PsbZ, Psb30/Ycf12, at least 3 peripheral proteins of the oxygen-evolving complex and a large number of cofactors. It forms dimeric complexes.

It localises to the plastid. The protein localises to the chloroplast thylakoid membrane. Its function is as follows. One of the components of the core complex of photosystem II (PSII). PSII is a light-driven water:plastoquinone oxidoreductase that uses light energy to abstract electrons from H(2)O, generating O(2) and a proton gradient subsequently used for ATP formation. It consists of a core antenna complex that captures photons, and an electron transfer chain that converts photonic excitation into a charge separation. This is Photosystem II reaction center protein J from Oryza nivara (Indian wild rice).